The chain runs to 158 residues: Large ribosomal subunit protein uL15 (158 aa).

Basic and acidic residues predominate over residues 1 to 13; the sequence is MKLNEIKDNEGST. Positions 1–44 are disordered; sequence MKLNEIKDNEGSTHSRKRLGRGIGSGSGKTAGRGVKGQKSRSGV. The segment covering 21–35 has biased composition (gly residues); that stretch reads RGIGSGSGKTAGRGV.

It belongs to the universal ribosomal protein uL15 family. In terms of assembly, part of the 50S ribosomal subunit.

Its function is as follows. Binds to the 23S rRNA. This chain is Large ribosomal subunit protein uL15, found in Rhizobium etli (strain ATCC 51251 / DSM 11541 / JCM 21823 / NBRC 15573 / CFN 42).